A 171-amino-acid polypeptide reads, in one-letter code: Transcription antitermination protein NusB (171 aa).

The protein belongs to the NusB family.

In terms of biological role, involved in transcription antitermination. Required for transcription of ribosomal RNA (rRNA) genes. Binds specifically to the boxA antiterminator sequence of the ribosomal RNA (rrn) operons. The chain is Transcription antitermination protein NusB from Brucella abortus (strain S19).